The sequence spans 143 residues: Large ribosomal subunit protein uL15 (143 aa).

Composition is skewed to basic residues over residues Met1–Gly13 and Lys23–Gly38. Residues Met1–Gly38 form a disordered region.

The protein belongs to the universal ribosomal protein uL15 family. In terms of assembly, part of the 50S ribosomal subunit.

Functionally, binds to the 23S rRNA. This is Large ribosomal subunit protein uL15 from Methanococcus maripaludis (strain C7 / ATCC BAA-1331).